A 361-amino-acid chain; its full sequence is 3-dehydroquinate synthase (361 aa).

Residues 70 to 75 (DGEQHK), 104 to 108 (GVVGD), 128 to 129 (TT), Lys141, and Lys150 each bind NAD(+). Zn(2+) is bound by residues Glu183, His246, and His263.

This sequence belongs to the sugar phosphate cyclases superfamily. Dehydroquinate synthase family. Co(2+) is required as a cofactor. The cofactor is Zn(2+). Requires NAD(+) as cofactor.

It localises to the cytoplasm. The enzyme catalyses 7-phospho-2-dehydro-3-deoxy-D-arabino-heptonate = 3-dehydroquinate + phosphate. The protein operates within metabolic intermediate biosynthesis; chorismate biosynthesis; chorismate from D-erythrose 4-phosphate and phosphoenolpyruvate: step 2/7. In terms of biological role, catalyzes the conversion of 3-deoxy-D-arabino-heptulosonate 7-phosphate (DAHP) to dehydroquinate (DHQ). This chain is 3-dehydroquinate synthase, found in Teredinibacter turnerae (strain ATCC 39867 / T7901).